Here is a 216-residue protein sequence, read N- to C-terminus: Refilin-A (216 aa).

The segment at 1 to 83 is disordered; the sequence is MVGHLHLQGM…LPNPPASEMR (83 aa). Over residues 12-22 the composition is skewed to basic and acidic residues; the sequence is DSLKEQGREGL. Residues 29-39 are compositionally biased toward pro residues; sequence GLPPSPSPSPP. Over residues 57–71 the composition is skewed to low complexity; it reads ASSEPPGPSEARAPP. Arg-163 carries the post-translational modification Asymmetric dimethylarginine.

It belongs to the Refilin family. As to quaternary structure, interacts with FLNA and FLNB.

It is found in the cytoplasm. The protein localises to the cytoskeleton. In terms of biological role, involved in the regulation of the perinuclear actin network and nuclear shape through interaction with filamins. Plays an essential role in actin cytoskeleton formation in developing cartilaginous cells. The protein is Refilin-A of Homo sapiens (Human).